The sequence spans 213 residues: Protein nullo (213 aa).

Blastoderm. Throughout the entire cortex of the embryo although the distribution is not uniform.

Functionally, actin-myosin network stability during cellularization. Might be involved in increasing actin-actin interactions or membrane-to-cytoskeleton attachments. nullo together with Sry-a and bnk may provide auxiliary functions, by acting both to stabilize a large and dynamic microfilament structure and regulate its functions. The chain is Protein nullo (nullo) from Drosophila melanogaster (Fruit fly).